The following is a 146-amino-acid chain: Hemoglobin subunit beta/beta' (146 aa).

The Globin domain maps to 2-146 (HWSAEEKQLI…VAHALARKYH (145 aa)). The heme b site is built by H63 and H92.

Belongs to the globin family. As to quaternary structure, heterotetramer of two alpha chains and two beta chains. As to expression, red blood cells.

Involved in oxygen transport from the lung to the various peripheral tissues. This is Hemoglobin subunit beta/beta' (HBB) from Chroicocephalus ridibundus (Black-headed gull).